A 287-amino-acid chain; its full sequence is 4-hydroxybenzoate octaprenyltransferase (287 aa).

9 helical membrane-spanning segments follow: residues 20–40 (IGSL…ADGL), 43–63 (MHVL…GCVI), 94–114 (LGLF…MNTL), 115–135 (TIML…MKRY), 137–157 (HLPQ…AYAA), 159–179 (AGEL…WTIA), 210–230 (IIIG…GHSL), 235–255 (IYYW…RLIG), and 266–286 (FLNN…SVMM).

Belongs to the UbiA prenyltransferase family. Mg(2+) is required as a cofactor.

It localises to the cell inner membrane. It catalyses the reaction all-trans-octaprenyl diphosphate + 4-hydroxybenzoate = 4-hydroxy-3-(all-trans-octaprenyl)benzoate + diphosphate. Its pathway is cofactor biosynthesis; ubiquinone biosynthesis. In terms of biological role, catalyzes the prenylation of para-hydroxybenzoate (PHB) with an all-trans polyprenyl group. Mediates the second step in the final reaction sequence of ubiquinone-8 (UQ-8) biosynthesis, which is the condensation of the polyisoprenoid side chain with PHB, generating the first membrane-bound Q intermediate 3-octaprenyl-4-hydroxybenzoate. This is 4-hydroxybenzoate octaprenyltransferase from Photobacterium profundum (strain SS9).